Here is a 284-residue protein sequence, read N- to C-terminus: Circadian clock oscillator protein KaiA (284 aa).

Residues 1-135 (MLSQIAICIW…LRLAPVETMA (135 aa)) form a psR domain, binds oxidized quinones region. Residues 1–164 (MLSQIAICIW…DLAQRLQERL (164 aa)) form the KaiA N-terminal domain. A flexible linker region spans residues 165–173 (GYLGVYYKR). Positions 174–282 (DPDRFLRNLP…CEMYRRSIPR (109 aa)) constitute a KaiA C-terminal domain.

This sequence belongs to the KaiA family. As to quaternary structure, homodimer. The KaiABC complex composition changes during the circadian cycle to control KaiC phosphorylation. Complexes KaiC(6), KaiA(2-4):KaiC(6), KaiB(6):KaiC(6) and KaiC(6):KaiB(6):KaiA(12) are among the most important forms, many form cooperatively. The KaiA:KaiB complex is only found at 20-24 hours in the circadian cycle (subjective night). Binds to the C-terminal A-loop of KaiC via a coiled-coil structure. KaiA and CikA compete for binding to KaiB(fs). CikA copurifies with this protein in the clock complex. Interacts with LdpA.

With respect to regulation, binding of oxidized quinones (produced as darkness falls) prevents KaiA from stimulating KaiC autophosphorylation. Functionally, key component of the KaiABC oscillator complex, which constitutes the main circadian regulator in cyanobacteria. Complex composition changes during the circadian cycle to control KaiC phosphorylation. KaiA stimulates KaiC autophosphorylation, while KaiB sequesters KaiA, leading to KaiC autodephosphorylation. KaiA binding to the KaiC CII domain during the subjective day yields KaiA(2-4):KaiC(6) complexes which stimulate KaiC autophosphorylation. A KaiA dimer is sufficient to enhance KaiC hexamer phosphorylation. Phospho-Ser-431 KaiC accumulation triggers binding of KaiB during the subjective night to form the KaiB(6):KaiC(6) complex, leading to changes in the output regulators CikA and SasA. KaiB(6):KaiC(6) formation exposes a site for KaiA binding on KaiB that sequesters KaiA from KaiC's CII domain, making the KaiC(6):KaiB(6):KaiA(12) complex resulting in KaiC autodephosphorylation. Complete dephosphorylation of KaiC leads to dissociation of KaiA(2):KaiB(1), completing 1 cycle of the Kai oscillator. Circadian oscillations can be generated in vitro by incubating KaiA, KaiB and KaiC with 1 mM ATP. The cycle is self-sustainable for at least 3 cycles and resistant to temperature changes. A very robust clock is reconstituted with KaiA, KaiB, KaiC, SasA, CikA and RpaA; output is measured by transcription from an appropriate reporter. In terms of biological role, kaiA binds oxidized quinones via its N-terminal PsR domain and is able to sense redox signals directly; quinone analog DBMIB (2,5-dibromo-3-methyl-6-isopropyl-p-benzoquinone) blocks KaiA stimulation of KaiC phosphorylation. The homodimer binds up to 8 quinones in the crystal structure, 3 in the PsR domain and 1 via the C-terminal helical bundle. Binding of oxidized quinone to the KaiA C-terminal domain reduces the phosphorylation of KaiC slightly; quinones may interact in a complex manner with KaiA to mediate clock input. The protein is Circadian clock oscillator protein KaiA of Synechococcus elongatus (strain ATCC 33912 / PCC 7942 / FACHB-805) (Anacystis nidulans R2).